Here is a 337-residue protein sequence, read N- to C-terminus: Glyceraldehyde-3-phosphate dehydrogenase 1 (337 aa).

Residues 12–13 (RI), Asp-34, and Arg-79 each bind NAD(+). Residues 150-152 (SCT), Thr-181, 210-211 (TG), and Arg-233 contribute to the D-glyceraldehyde 3-phosphate site. Cys-151 serves as the catalytic Nucleophile. Asn-315 is a binding site for NAD(+).

The protein belongs to the glyceraldehyde-3-phosphate dehydrogenase family. Homotetramer.

Its subcellular location is the cytoplasm. The catalysed reaction is D-glyceraldehyde 3-phosphate + phosphate + NAD(+) = (2R)-3-phospho-glyceroyl phosphate + NADH + H(+). The protein operates within carbohydrate degradation; glycolysis; pyruvate from D-glyceraldehyde 3-phosphate: step 1/5. The polypeptide is Glyceraldehyde-3-phosphate dehydrogenase 1 (GPD1) (Mucor circinelloides f. lusitanicus (Mucor racemosus var. lusitanicus)).